The chain runs to 203 residues: E3 ubiquitin-protein ligase RNF152 (203 aa).

The RING-type zinc-finger motif lies at 12 to 55; the sequence is CQICFNYYSPRRRPKLLDCKHTCCSVCLQQMRTSQKDVRCPWCR. The tract at residues 106 to 165 is necessary for interaction with RRAGA; the sequence is ISKERALLPGDMGCRLLPGSQQKSVTVVTVPAEQRPLQGGAPQEAVEEEPDRRGVAKSST. The chain crosses the membrane as a helical span at residues 167-187; the sequence is SGVCTVILVACVLVFLLGIVL.

The protein belongs to the RNF152 family. As to quaternary structure, interacts with RRAGA (inactive GDP-bound form); stimulated by amino acid starvation. Post-translationally, ubiquitinated. Autoubiquitinated in vitro, leading to its degradation by the proteasome.

Its subcellular location is the lysosome membrane. It carries out the reaction S-ubiquitinyl-[E2 ubiquitin-conjugating enzyme]-L-cysteine + [acceptor protein]-L-lysine = [E2 ubiquitin-conjugating enzyme]-L-cysteine + N(6)-ubiquitinyl-[acceptor protein]-L-lysine.. Its pathway is protein modification; protein ubiquitination. In terms of biological role, E3 ubiquitin-protein ligase that acts as a negative regulator of mTORC1 signaling by mediating ubiquitination of RagA/RRAGA and RHEB. Catalyzes 'Lys-63'-linked polyubiquitination of RagA/RRAGA in response to amino acid starvation, thereby regulating mTORC1 signaling. Also mediates monoubiquitination of RHEB, promoting its association with the TSC-TBC complex and subsequent inhibition. Also mediates 'Lys-48'-linked polyubiquitination of target proteins and their subsequent targeting to the proteasome for degradation. Induces apoptosis when overexpressed. This Ailuropoda melanoleuca (Giant panda) protein is E3 ubiquitin-protein ligase RNF152.